We begin with the raw amino-acid sequence, 188 residues long: D-glycero-beta-D-manno-heptose-1,7-bisphosphate 7-phosphatase (188 aa).

D11 functions as the Nucleophile in the catalytic mechanism. Mg(2+) contacts are provided by D11 and D13. Substrate contacts are provided by residues D11–D13, D19–Y22, and T53–S56. D13 (proton donor) is an active-site residue. The Zn(2+) site is built by C92, H94, C107, and C109. R110–K111 is a binding site for substrate. D136 and K137 together coordinate Mg(2+). A substrate-binding site is contributed by K137.

It belongs to the GmhB family. In terms of assembly, monomer. Mg(2+) is required as a cofactor. Zn(2+) serves as cofactor.

It localises to the cytoplasm. The enzyme catalyses D-glycero-beta-D-manno-heptose 1,7-bisphosphate + H2O = D-glycero-beta-D-manno-heptose 1-phosphate + phosphate. The protein operates within nucleotide-sugar biosynthesis; ADP-L-glycero-beta-D-manno-heptose biosynthesis; ADP-L-glycero-beta-D-manno-heptose from D-glycero-beta-D-manno-heptose 7-phosphate: step 2/4. It functions in the pathway bacterial outer membrane biogenesis; LPS core biosynthesis. Functionally, converts the D-glycero-beta-D-manno-heptose 1,7-bisphosphate intermediate into D-glycero-beta-D-manno-heptose 1-phosphate by removing the phosphate group at the C-7 position in vitro. Also catalyzes the dephosphorylation of D-glycero-alpha-D-manno-heptose 1,7-bisphosphate and 2-deoxy-D-manno-2-octoulosonate-8-phosphate in vitro. The polypeptide is D-glycero-beta-D-manno-heptose-1,7-bisphosphate 7-phosphatase (gmhB) (Salmonella typhi).